Here is a 20-residue protein sequence, read N- to C-terminus: Ferric reductase A (20 aa).

As to quaternary structure, monomer.

It carries out the reaction 2 a Fe(II)-siderophore + NAD(+) + H(+) = 2 a Fe(III)-siderophore + NADH. Reductase activity that acts on Fe(3+)-chelates and NADH as an electron donor and requires the presence of FMN for full activity. May play a role in iron uptake. This Paracoccus denitrificans protein is Ferric reductase A (ferA).